The chain runs to 74 residues: Neuropeptide-like protein 33 (74 aa).

A signal peptide spans 1–21 (MISTSLLLVVLLFAILAIVDA). Tyr-72 carries the post-translational modification Tyrosine amide.

The protein belongs to the YARP (YGGW-amide related peptide) family. In terms of tissue distribution, expressed in hypoderm.

Its subcellular location is the secreted. In terms of biological role, may have antifungic activity against D.coniospora. In Caenorhabditis elegans, this protein is Neuropeptide-like protein 33 (nlp-33).